Reading from the N-terminus, the 478-residue chain is Cytochrome c-552 (478 aa).

Residues 1–26 (MTRIKINARRIFSLLIPFFFFTSVHA) form the signal peptide. Histidine 94 is a binding site for heme c. Residues cysteine 122, cysteine 125, and lysine 126 each coordinate heme. The heme c site is built by cysteine 160, cysteine 163, histidine 164, cysteine 209, cysteine 212, and histidine 213. Glutamate 215, tyrosine 216, lysine 261, and glutamine 263 together coordinate Ca(2+). A substrate-binding site is contributed by tyrosine 216. A substrate-binding site is contributed by histidine 264. Residues histidine 275, cysteine 282, cysteine 285, histidine 286, histidine 301, cysteine 314, cysteine 317, histidine 318, and histidine 393 each contribute to the heme c site.

Belongs to the cytochrome c-552 family. The cofactor is Ca(2+). Heme c serves as cofactor.

It localises to the periplasm. The enzyme catalyses 6 Fe(III)-[cytochrome c] + NH4(+) + 2 H2O = 6 Fe(II)-[cytochrome c] + nitrite + 8 H(+). It functions in the pathway nitrogen metabolism; nitrate reduction (assimilation). Its function is as follows. Catalyzes the reduction of nitrite to ammonia, consuming six electrons in the process. This Escherichia coli O157:H7 (strain EC4115 / EHEC) protein is Cytochrome c-552.